Reading from the N-terminus, the 364-residue chain is tRNA 2-selenouridine synthase (364 aa).

The Rhodanese domain maps to 14–137; sequence LLADTPLIDV…LRQTAIQATW (124 aa). The active-site S-selanylcysteine intermediate is Cys-97. Position 149 (Gly-149) interacts with (2E)-geranyl diphosphate.

Belongs to the SelU family. Monomer.

It carries out the reaction 5-methylaminomethyl-2-thiouridine(34) in tRNA + selenophosphate + (2E)-geranyl diphosphate + H2O + H(+) = 5-methylaminomethyl-2-selenouridine(34) in tRNA + (2E)-thiogeraniol + phosphate + diphosphate. It catalyses the reaction 5-methylaminomethyl-2-thiouridine(34) in tRNA + (2E)-geranyl diphosphate = 5-methylaminomethyl-S-(2E)-geranyl-thiouridine(34) in tRNA + diphosphate. The enzyme catalyses 5-methylaminomethyl-S-(2E)-geranyl-thiouridine(34) in tRNA + selenophosphate + H(+) = 5-methylaminomethyl-2-(Se-phospho)selenouridine(34) in tRNA + (2E)-thiogeraniol. The catalysed reaction is 5-methylaminomethyl-2-(Se-phospho)selenouridine(34) in tRNA + H2O = 5-methylaminomethyl-2-selenouridine(34) in tRNA + phosphate. Involved in the post-transcriptional modification of the uridine at the wobble position (U34) of tRNA(Lys), tRNA(Glu) and tRNA(Gln). Catalyzes the conversion of 2-thiouridine (S2U-RNA) to 2-selenouridine (Se2U-RNA). Acts in a two-step process involving geranylation of 2-thiouridine (S2U) to S-geranyl-2-thiouridine (geS2U) and subsequent selenation of the latter derivative to 2-selenouridine (Se2U) in the tRNA chain. This is tRNA 2-selenouridine synthase from Salmonella typhimurium (strain LT2 / SGSC1412 / ATCC 700720).